The primary structure comprises 246 residues: Pyridoxine 5'-phosphate synthase (246 aa).

Asparagine 8 and arginine 19 together coordinate 3-amino-2-oxopropyl phosphate. Histidine 44 (proton acceptor) is an active-site residue. 1-deoxy-D-xylulose 5-phosphate contacts are provided by arginine 46 and histidine 51. The Proton acceptor role is filled by glutamate 76. Threonine 106 lines the 1-deoxy-D-xylulose 5-phosphate pocket. Histidine 198 serves as the catalytic Proton donor. Residues aspartate 199 and 221 to 222 each bind 3-amino-2-oxopropyl phosphate; that span reads GH.

This sequence belongs to the PNP synthase family. In terms of assembly, homooctamer; tetramer of dimers.

Its subcellular location is the cytoplasm. The catalysed reaction is 3-amino-2-oxopropyl phosphate + 1-deoxy-D-xylulose 5-phosphate = pyridoxine 5'-phosphate + phosphate + 2 H2O + H(+). It participates in cofactor biosynthesis; pyridoxine 5'-phosphate biosynthesis; pyridoxine 5'-phosphate from D-erythrose 4-phosphate: step 5/5. Its function is as follows. Catalyzes the complicated ring closure reaction between the two acyclic compounds 1-deoxy-D-xylulose-5-phosphate (DXP) and 3-amino-2-oxopropyl phosphate (1-amino-acetone-3-phosphate or AAP) to form pyridoxine 5'-phosphate (PNP) and inorganic phosphate. This Mesorhizobium japonicum (strain LMG 29417 / CECT 9101 / MAFF 303099) (Mesorhizobium loti (strain MAFF 303099)) protein is Pyridoxine 5'-phosphate synthase.